A 173-amino-acid chain; its full sequence is Bifunctional protein PyrR (173 aa).

The short motif at 93-105 (VILVDDVLYTGRT) is the PRPP-binding element.

The protein belongs to the purine/pyrimidine phosphoribosyltransferase family. PyrR subfamily. In terms of assembly, homodimer and homohexamer; in equilibrium.

The enzyme catalyses UMP + diphosphate = 5-phospho-alpha-D-ribose 1-diphosphate + uracil. In terms of biological role, regulates transcriptional attenuation of the pyrimidine nucleotide (pyr) operon by binding in a uridine-dependent manner to specific sites on pyr mRNA. This disrupts an antiterminator hairpin in the RNA and favors formation of a downstream transcription terminator, leading to a reduced expression of downstream genes. Its function is as follows. Also displays a weak uracil phosphoribosyltransferase activity which is not physiologically significant. The chain is Bifunctional protein PyrR from Streptococcus thermophilus (strain ATCC BAA-491 / LMD-9).